We begin with the raw amino-acid sequence, 283 residues long: Lactoylglutathione lyase GLX1 (283 aa).

A2 carries the post-translational modification N-acetylalanine. VOC domains lie at 17–141 and 147–275; these read RFLH…LIQR and PFCQ…LVDN. H20 lines the Zn(2+) pocket. Position 24 (R24) interacts with substrate. E71 is a binding site for Zn(2+). Substrate contacts are provided by N75 and H89. Residues H89, E137, and Q150 each coordinate Zn(2+). Catalysis depends on E137, which acts as the Proton donor/acceptor. 2 residues coordinate substrate: Q150 and R154. Residue Q150 participates in a divalent metal cation binding. E201 contributes to the Zn(2+) binding site. E201 serves as a coordination point for a divalent metal cation. Residue N205 coordinates substrate. Q219 contributes to the a divalent metal cation binding site. 251 to 252 contributes to the substrate binding site; sequence PL. Residue V271 participates in a divalent metal cation binding.

The protein belongs to the glyoxalase I family. Homodimer. Zn(2+) is required as a cofactor. Post-translationally, phosphorylated by SnRK2.8.

It catalyses the reaction (R)-S-lactoylglutathione = methylglyoxal + glutathione. The protein operates within secondary metabolite metabolism; methylglyoxal degradation; (R)-lactate from methylglyoxal: step 1/2. In terms of biological role, catalyzes the conversion of hemimercaptal, formed from methylglyoxal and glutathione, to S-lactoylglutathione. The chain is Lactoylglutathione lyase GLX1 from Arabidopsis thaliana (Mouse-ear cress).